Reading from the N-terminus, the 847-residue chain is B-cell receptor CD22 (847 aa).

The signal sequence occupies residues 1–19 (MHLLGPWLLLLVLEYLAFS). The 119-residue stretch at 20-138 (DSSKWVFEHP…MERIHLNVSE (119 aa)) folds into the Ig-like V-type domain. Over 20 to 687 (DSSKWVFEHP…YYSPETIGRR (668 aa)) the chain is Extracellular. Intrachain disulfides connect Cys39–Cys167, Cys44–Cys102, and Cys161–Cys219. N-linked (GlcNAc...) asparagine glycans are attached at residues Asn67, Asn101, and Asn112. Arg120 is an N-acetylneuraminate binding site. 3 N-linked (GlcNAc...) asparagine glycosylation sites follow: Asn135, Asn164, and Asn231. Ig-like C2-type domains are found at residues 143 to 235 (PHIQ…DTVQ), 242 to 326 (PKLE…VFLQ), 331 to 416 (PEPS…LDVQ), 419 to 500 (PKKV…VALN), 505 to 582 (PRDV…QTAS), and 593 to 676 (PRRL…STLT). 4 disulfide bridges follow: Cys265–Cys309, Cys353–Cys396, Cys442–Cys484, and Cys529–Cys571. N-linked (GlcNAc...) asparagine glycosylation is found at Asn363, Asn445, and Asn479. 2 N-linked (GlcNAc...) asparagine glycosylation sites follow: Asn574 and Asn634. Cys616 and Cys659 are joined by a disulfide. Residues 688–706 (VAVGLGSCLAILILAICGL) form a helical membrane-spanning segment. Topologically, residues 707–847 (KLQRRWKRTQ…ENVDYVILKH (141 aa)) are cytoplasmic. Phosphoserine is present on residues Ser725, Ser726, and Ser729. 2 short sequence motifs (ITIM motif) span residues 760–765 (ISYTTL) and 794–799 (VTYSAL). Tyr762 is subject to Phosphotyrosine. Phosphotyrosine occurs at positions 807, 822, and 842. 2 short sequence motifs (ITIM motif) span residues 820–825 (IHYSEL) and 840–845 (VDYVIL).

The protein belongs to the immunoglobulin superfamily. SIGLEC (sialic acid binding Ig-like lectin) family. As to quaternary structure, predominantly monomer of isoform CD22-beta. Also found as heterodimer of isoform CD22-beta and a shorter isoform. Interacts with PTPN6/SHP-1, LYN, SYK, PIK3R1/PIK3R2 and PLCG1 upon phosphorylation. Interacts with GRB2, INPP5D and SHC1 upon phosphorylation. May form a complex with INPP5D/SHIP, GRB2 and SHC1. Phosphorylation of Tyr-762, Tyr-807 and Tyr-822 are involved in binding to SYK, GRB2 and SYK, respectively. Phosphorylation of Tyr-842 is involved in binding to SYK, PLCG2 and PIK3R1/PIK3R2. Post-translationally, phosphorylated on tyrosine residues by LYN. In terms of tissue distribution, B-lymphocytes.

It localises to the cell membrane. In terms of biological role, most highly expressed siglec (sialic acid-binding immunoglobulin-like lectin) on B-cells that plays a role in various aspects of B-cell biology including differentiation, antigen presentation, and trafficking to bone marrow. Binds to alpha 2,6-linked sialic acid residues of surface molecules such as CD22 itself, CD45 and IgM in a cis configuration. Can also bind to ligands on other cells as an adhesion molecule in a trans configuration. Acts as an inhibitory coreceptor on the surface of B-cells and inhibits B-cell receptor induced signaling, characterized by inhibition of the calcium mobilization and cellular activation. Mechanistically, the immunoreceptor tyrosine-based inhibitory motif domain is phosphorylated by the Src kinase LYN, which in turn leads to the recruitment of the protein tyrosine phosphatase 1/PTPN6, leading to the negative regulation of BCR signaling. If this negative signaling from is of sufficient strength, apoptosis of the B-cell can be induced. The polypeptide is B-cell receptor CD22 (Homo sapiens (Human)).